The following is a 111-amino-acid chain: UPF0339 protein BP0521 (111 aa).

2 consecutive repeat copies span residues 9-57 and 60-108. The tract at residues 86–111 is disordered; that stretch reads TQARDNGIASVKSNAPGAPTKDQTQA.

This sequence belongs to the UPF0339 family. Duplicated subfamily.

The polypeptide is UPF0339 protein BP0521 (Bordetella pertussis (strain Tohama I / ATCC BAA-589 / NCTC 13251)).